We begin with the raw amino-acid sequence, 1172 residues long: DNA-directed RNA polymerase subunit beta (1172 aa).

The protein belongs to the RNA polymerase beta chain family. In terms of assembly, the RNAP catalytic core consists of 2 alpha, 1 beta, 1 beta' and 1 omega subunit. When a sigma factor is associated with the core the holoenzyme is formed, which can initiate transcription.

The catalysed reaction is RNA(n) + a ribonucleoside 5'-triphosphate = RNA(n+1) + diphosphate. Functionally, DNA-dependent RNA polymerase catalyzes the transcription of DNA into RNA using the four ribonucleoside triphosphates as substrates. The chain is DNA-directed RNA polymerase subunit beta from Mycobacterium sp. (strain KMS).